The chain runs to 156 residues: MSRRTTAKKRLAVPDPIYNSRLVSMLTVRILQQGKKHLAQRIIYQALDIIKERTGEDALNILETAVRKVTPLVEVKARRIGGSTYQVPMEVRAFRGTNLALRWITKYSKERSGKSMAMKLANEIMDAVNETGNSVRKREEVHKMAEANKAFAHYRF.

Belongs to the universal ribosomal protein uS7 family. As to quaternary structure, part of the 30S ribosomal subunit.

Its subcellular location is the plastid. The protein resides in the chloroplast. One of the primary rRNA binding proteins, it binds directly to 16S rRNA where it nucleates assembly of the head domain of the 30S subunit. The chain is Small ribosomal subunit protein uS7c (rps7) from Rhodomonas salina (Cryptomonas salina).